We begin with the raw amino-acid sequence, 215 residues long: Ependymin-2 (215 aa).

A signal peptide spans 1–20 (MHTVKLLCVVFSCLCAVAWA). N71 and N94 each carry an N-linked (GlcNAc...) asparagine glycan.

It belongs to the ependymin family. Forms disulfide-linked dimers. Different glycosylation variants are known as EPD-beta and EPD-gamma. In terms of processing, binds calcium through the terminal sialic acids. As to expression, EPDs are synthesized in the meninx and secreted in the cerebrospinal fluid.

Its subcellular location is the secreted. In terms of biological role, may play a role in neural plasticity. May be involved during axon regeneration. This Carassius auratus (Goldfish) protein is Ependymin-2 (epd2).